The primary structure comprises 326 residues: ATP synthase subunit gamma, mitochondrial (326 aa).

Residues 1–45 (MAMAALRREGRRLAAAPFTSPTPLNALRSSLVSPSEEIGLSGVRS) constitute a mitochondrion transit peptide.

This sequence belongs to the ATPase gamma chain family. In terms of assembly, F-type ATPases have 2 components, CF(1) - the catalytic core - and CF(0) - the membrane proton channel. CF(1) has five subunits: alpha(3), beta(3), gamma(1), delta(1), epsilon(1). CF(0) has three main subunits: a, b and c.

Its subcellular location is the mitochondrion. The protein localises to the mitochondrion inner membrane. Mitochondrial membrane ATP synthase (F(1)F(0) ATP synthase or Complex V) produces ATP from ADP in the presence of a proton gradient across the membrane which is generated by electron transport complexes of the respiratory chain. F-type ATPases consist of two structural domains, F(1) - containing the extramembraneous catalytic core, and F(0) - containing the membrane proton channel, linked together by a central stalk and a peripheral stalk. During catalysis, ATP synthesis in the catalytic domain of F(1) is coupled via a rotary mechanism of the central stalk subunits to proton translocation. Part of the complex F(1) domain and the central stalk which is part of the complex rotary element. The gamma subunit protrudes into the catalytic domain formed of alpha(3)beta(3). Rotation of the central stalk against the surrounding alpha(3)beta(3) subunits leads to hydrolysis of ATP in three separate catalytic sites on the beta subunits. The protein is ATP synthase subunit gamma, mitochondrial (ATPC) of Ipomoea batatas (Sweet potato).